Consider the following 815-residue polypeptide: (-)-kolavenyl diphosphate synthase TPS10, chloroplastic (815 aa).

The transit peptide at 1-50 directs the protein to the chloroplast; that stretch reads MFMSSSSSSHARRPQLSSFSYLHPPLPFPGLSFSSTRDKRVNFDSTRIIS. Position 247 (Lys-247) interacts with substrate. Mg(2+)-binding residues include Asp-379 and Asp-381. A DXDD motif motif is present at residues 379-382; it reads DIDD. Lys-465 is a binding site for substrate.

The protein belongs to the terpene synthase family. Tpsc subfamily. Requires Mg(2+) as cofactor.

It is found in the plastid. It localises to the chloroplast. The catalysed reaction is (2E,6E,10E)-geranylgeranyl diphosphate = (-)-kolavenyl diphosphate. With respect to regulation, inhibited by high concentrations of magnesium. Functionally, diterpene synthase that catalyzes the formation of (-)-kolavenyl diphosphate from geranylgeranyl diphosphate (GGPP). The polypeptide is (-)-kolavenyl diphosphate synthase TPS10, chloroplastic (Tripterygium wilfordii (Thunder God vine)).